The sequence spans 381 residues: MESIGVVAPHTMHFAEPLRLQSGSVLGNYQLVVETYGELNAARSNAVLVCHALNASHHVAGVYADDPRSTGWWDNMVGPGKPLDTNRFFVIGVNNLGSCFGSTGPMSIDPATGTPYGARFPVVTVEDWVHAQARVADAFGIERFAAVMGGSLGGMQALAWSLLYPERVAHCIDIASTPKLSAQNIAFNEVARSAILSDPDFHGGDYYAHGVKPRRGLRVARMIGHITYLSDDDMAEKFGRALRRADGALDAYNFNFDVEFEVESYLRYQGDKFADYFDANTYLLITRALDYFDPAKAFNGDLSAALAHTKAKYLIASFMTDWRFAPARSREIVKALLDNRRSVSYAEIDAPHGHDAFLLDDARYHNLVRAYYERIAEEVGA.

The 316-residue stretch at N45–D360 folds into the AB hydrolase-1 domain. Catalysis depends on S151, which acts as the Nucleophile. R221 provides a ligand contact to substrate. Residues D321 and H354 contribute to the active site. D355 serves as a coordination point for substrate.

This sequence belongs to the AB hydrolase superfamily. MetX family. In terms of assembly, homodimer.

It localises to the cytoplasm. It carries out the reaction L-homoserine + succinyl-CoA = O-succinyl-L-homoserine + CoA. It participates in amino-acid biosynthesis; L-methionine biosynthesis via de novo pathway; O-succinyl-L-homoserine from L-homoserine: step 1/1. Its function is as follows. Transfers a succinyl group from succinyl-CoA to L-homoserine, forming succinyl-L-homoserine. The polypeptide is Homoserine O-succinyltransferase (Burkholderia mallei (strain NCTC 10247)).